The chain runs to 235 residues: Small ribosomal subunit protein uS3 (235 aa).

The KH type-2 domain maps to 39 to 107 (VRKFLNKELA…PAQINIAEVK (69 aa)).

It belongs to the universal ribosomal protein uS3 family. As to quaternary structure, part of the 30S ribosomal subunit. Forms a tight complex with proteins S10 and S14.

Its function is as follows. Binds the lower part of the 30S subunit head. Binds mRNA in the 70S ribosome, positioning it for translation. The sequence is that of Small ribosomal subunit protein uS3 from Actinobacillus pleuropneumoniae serotype 5b (strain L20).